Consider the following 305-residue polypeptide: tRNA uridine(34) hydroxylase (305 aa).

Residues Asp-130 to Ser-228 form the Rhodanese domain. The active-site Cysteine persulfide intermediate is the Cys-188.

The protein belongs to the TrhO family.

It catalyses the reaction uridine(34) in tRNA + AH2 + O2 = 5-hydroxyuridine(34) in tRNA + A + H2O. Its function is as follows. Catalyzes oxygen-dependent 5-hydroxyuridine (ho5U) modification at position 34 in tRNAs. The polypeptide is tRNA uridine(34) hydroxylase (Synechococcus sp. (strain CC9902)).